A 343-amino-acid chain; its full sequence is Thromboxane A2 receptor (343 aa).

The Extracellular segment spans residues M1–W29. 2 N-linked (GlcNAc...) asparagine glycosylation sites follow: N4 and N16. Residues F30–A52 traverse the membrane as a helical segment. The Cytoplasmic portion of the chain corresponds to R53–F66. The helical transmembrane segment at L67–S87 threads the bilayer. Residues Q88–R106 are Extracellular-facing. C105 and C183 are oxidised to a cystine. Residues F107–S128 traverse the membrane as a helical segment. The Cytoplasmic segment spans residues E129–A149. A helical transmembrane segment spans residues W150–G172. The Extracellular portion of the chain corresponds to R173 to D193. A helical transmembrane segment spans residues V194–V219. Residues A220–Q246 lie on the Cytoplasmic side of the membrane. Residues L247–L270 form a helical membrane-spanning segment. Residues R271–E289 are Extracellular-facing. A helical membrane pass occupies residues L290–F311. Topologically, residues R312–Q343 are cytoplasmic. Phosphoserine is present on residues S329 and S331.

This sequence belongs to the G-protein coupled receptor 1 family. As to quaternary structure, interacts with RPGRIP1L. Interacts with PSMA3. Interacts with RACK1; the interaction regulates TBXA2R cell surface expression.

The protein resides in the cell membrane. Functionally, receptor for thromboxane A2 (TXA2), a potent stimulator of platelet aggregation. The activity of this receptor is mediated by a G-protein that activates a phosphatidylinositol-calcium second messenger system. In the kidney, the binding of TXA2 to glomerular TP receptors causes intense vasoconstriction. Activates phospholipase C. Activates adenylyl cyclase. Its function is as follows. Inhibits adenylyl cyclase. The sequence is that of Thromboxane A2 receptor (TBXA2R) from Homo sapiens (Human).